The chain runs to 473 residues: MAAKTYDAGVKDYRSIYWEPQYQVKDSDILAVFKVVPQPGVSREEAAAAVAAESSTATWTTVWTDLLTDLDYYKGRAYAIEDVPGSDEAFYAFIAYPMDLFEEGSVVNVFTSLVGNVFGFKAVRALRLEDVRFPLWFVMTCPGAPHGMKVERDLLDKYGRPLLGCTIKPKLGLAAKNYGRAVYECLRGGLDFTKDDENVNSQPFLRWRDRFLFCQEAIQKAEAETGERKGHYMNVTAGTMEEIYERAEFAKEIGTPIIMSDYLTVGWAAHTSLSRWCRKNGMLLHVHRAMHAVMDRNPNHGINFRVLAKILRLMGGDHLHSGTVVGKLEGDREATIGWINLLRDRFIKADRSRGIFFDQDWGPQPGLFPVASGGIHVWHMPALVSIFGNDSVLQFGGGTLGHPWGNAAGACANRVALEACVQARNEGRHLEKEGKEILTKAAQSSPELRMAMETWKEIKFEFDTVDKLDVQHR.

2 residues coordinate substrate: Asn-116 and Thr-166. Lys-168 (proton acceptor) is an active-site residue. Lys-170 is a substrate binding site. Mg(2+)-binding residues include Lys-194, Asp-196, and Glu-197. An N6-carboxylysine modification is found at Lys-194. His-287 serves as the catalytic Proton acceptor. Positions 288, 320, and 372 each coordinate substrate.

This sequence belongs to the RuBisCO large chain family. Type I subfamily. In terms of assembly, heterohexadecamer of 8 large chains and 8 small chains. Mg(2+) serves as cofactor.

It catalyses the reaction 2 (2R)-3-phosphoglycerate + 2 H(+) = D-ribulose 1,5-bisphosphate + CO2 + H2O. The enzyme catalyses D-ribulose 1,5-bisphosphate + O2 = 2-phosphoglycolate + (2R)-3-phosphoglycerate + 2 H(+). Functionally, ruBisCO catalyzes two reactions: the carboxylation of D-ribulose 1,5-bisphosphate, the primary event in carbon dioxide fixation, as well as the oxidative fragmentation of the pentose substrate. Both reactions occur simultaneously and in competition at the same active site. This chain is Ribulose bisphosphate carboxylase large chain, found in Rhodobacter capsulatus (strain ATCC BAA-309 / NBRC 16581 / SB1003).